Consider the following 192-residue polypeptide: Phosphoheptose isomerase (192 aa).

Residues Val34 to Asn192 form the SIS domain. Substrate is bound at residue Asn49–Gly51. Zn(2+) contacts are provided by His58 and Glu62. Substrate contacts are provided by residues Glu62, Asn91–Asp92, Ser117–Ser119, Ser122, and Gln169. The Zn(2+) site is built by Gln169 and His177.

It belongs to the SIS family. GmhA subfamily. As to quaternary structure, homotetramer. The cofactor is Zn(2+).

It localises to the cytoplasm. It carries out the reaction 2 D-sedoheptulose 7-phosphate = D-glycero-alpha-D-manno-heptose 7-phosphate + D-glycero-beta-D-manno-heptose 7-phosphate. The protein operates within carbohydrate biosynthesis; D-glycero-D-manno-heptose 7-phosphate biosynthesis; D-glycero-alpha-D-manno-heptose 7-phosphate and D-glycero-beta-D-manno-heptose 7-phosphate from sedoheptulose 7-phosphate: step 1/1. Catalyzes the isomerization of sedoheptulose 7-phosphate in D-glycero-D-manno-heptose 7-phosphate. This is Phosphoheptose isomerase from Geobacter sp. (strain M21).